The following is a 469-amino-acid chain: 3-isopropylmalate dehydratase large subunit (469 aa).

The [4Fe-4S] cluster site is built by cysteine 350, cysteine 410, and cysteine 413.

This sequence belongs to the aconitase/IPM isomerase family. LeuC type 1 subfamily. In terms of assembly, heterodimer of LeuC and LeuD. [4Fe-4S] cluster is required as a cofactor.

The catalysed reaction is (2R,3S)-3-isopropylmalate = (2S)-2-isopropylmalate. The protein operates within amino-acid biosynthesis; L-leucine biosynthesis; L-leucine from 3-methyl-2-oxobutanoate: step 2/4. Catalyzes the isomerization between 2-isopropylmalate and 3-isopropylmalate, via the formation of 2-isopropylmaleate. The polypeptide is 3-isopropylmalate dehydratase large subunit (Agrobacterium fabrum (strain C58 / ATCC 33970) (Agrobacterium tumefaciens (strain C58))).